The following is a 552-amino-acid chain: 5'-AMP-activated protein kinase catalytic subunit alpha-2 (552 aa).

Residues 16-268 enclose the Protein kinase domain; it reads YVLGDTLGVG…IKDIREHEWF (253 aa). Residues 22–30 and Lys-45 contribute to the ATP site; that span reads LGVGTFGKV. Residue Asp-139 is the Proton acceptor of the active site. At Thr-172 the chain carries Phosphothreonine; by LKB1 and CaMKK2. Thr-258 carries the phosphothreonine modification. An AIS region spans residues 291–376; sequence EAVKEVCEKF…PERMPPLIAD (86 aa). Ser-377 is modified (phosphoserine). Positions 478 to 520 are disordered; it reads EQRSGSSTPQRSCSAAGLHRPRSSVDSSTAENHSLSGSLTGSL. Over residues 480-490 the composition is skewed to polar residues; sequence RSGSSTPQRSC. Ser-491 is modified (phosphoserine). Over residues 501–510 the composition is skewed to polar residues; the sequence is SVDSSTAENH. The span at 511–520 shows a compositional bias: low complexity; the sequence is SLSGSLTGSL.

The protein belongs to the protein kinase superfamily. CAMK Ser/Thr protein kinase family. SNF1 subfamily. AMPK is a heterotrimer of an alpha catalytic subunit (PRKAA1 or PRKAA2), a beta (PRKAB1 or PRKAB2) and a gamma non-catalytic subunits (PRKAG1, PRKAG2 or PRKAG3). Interacts with FNIP1 and FNIP2. Associates with internalized INSR complexes on Golgi/endosomal membranes; PRKAA2/AMPK2 together with ATIC and HACD3/PTPLAD1 is proposed to be part of a signaling network regulating INSR autophosphorylation and endocytosis. Interacts with DUSP29. Interacts with ARF6. The phosphorylated form at Thr-172 mediated by CamKK2 interacts with ACSS2. Requires Mg(2+) as cofactor. In terms of processing, ubiquitinated. Phosphorylated at Thr-172 by STK11/LKB1 in complex with STE20-related adapter-alpha (STRADA) pseudo kinase and CAB39. Also phosphorylated at Thr-172 by CAMKK2; triggered by a rise in intracellular calcium ions, without detectable changes in the AMP/ATP ratio. CAMKK1 can also phosphorylate Thr-172, but at much lower level. Dephosphorylated by protein phosphatase 2A and 2C (PP2A and PP2C). Phosphorylated by ULK1; leading to negatively regulate AMPK activity and suggesting the existence of a regulatory feedback loop between ULK1 and AMPK. Dephosphorylated by PPM1A and PPM1B at Thr-172 (mediated by STK11/LKB1). In terms of tissue distribution, skeletal muscle, lower levels in liver, heart and kidney.

The protein resides in the cytoplasm. The protein localises to the nucleus. The enzyme catalyses L-seryl-[protein] + ATP = O-phospho-L-seryl-[protein] + ADP + H(+). The catalysed reaction is L-threonyl-[protein] + ATP = O-phospho-L-threonyl-[protein] + ADP + H(+). It catalyses the reaction L-seryl-[acetyl-CoA carboxylase] + ATP = O-phospho-L-seryl-[acetyl-CoA carboxylase] + ADP + H(+). It carries out the reaction L-seryl-[3-hydroxy-3-methylglutaryl-coenzyme A reductase] + ATP = O-phospho-L-seryl-[3-hydroxy-3-methylglutaryl-coenzyme A reductase] + ADP + H(+). With respect to regulation, activated by phosphorylation on Thr-172. Binding of AMP to non-catalytic gamma subunit (PRKAG1, PRKAG2 or PRKAG3) results in allosteric activation, inducing phosphorylation on Thr-172. AMP-binding to gamma subunit also sustains activity by preventing dephosphorylation of Thr-172. ADP also stimulates Thr-172 phosphorylation, without stimulating already phosphorylated AMPK. ATP promotes dephosphorylation of Thr-172, rendering the enzyme inactive. Under physiological conditions AMPK mainly exists in its inactive form in complex with ATP, which is much more abundant than AMP. Selectively inhibited by compound C (6-[4-(2-Piperidin-1-yl-ethoxy)-phenyl)]-3-pyridin-4-yl-pyyrazolo[1,5-a] pyrimidine. Activated by resveratrol, a natural polyphenol present in red wine, and S17834, a synthetic polyphenol. Salicylate/aspirin directly activates kinase activity, primarily by inhibiting Thr-172 dephosphorylation. In terms of biological role, catalytic subunit of AMP-activated protein kinase (AMPK), an energy sensor protein kinase that plays a key role in regulating cellular energy metabolism. In response to reduction of intracellular ATP levels, AMPK activates energy-producing pathways and inhibits energy-consuming processes: inhibits protein, carbohydrate and lipid biosynthesis, as well as cell growth and proliferation. AMPK acts via direct phosphorylation of metabolic enzymes, and by longer-term effects via phosphorylation of transcription regulators. Regulates lipid synthesis by phosphorylating and inactivating lipid metabolic enzymes such as ACACA, ACACB, GYS1, HMGCR and LIPE; regulates fatty acid and cholesterol synthesis by phosphorylating acetyl-CoA carboxylase (ACACA and ACACB) and hormone-sensitive lipase (LIPE) enzymes, respectively. Promotes lipolysis of lipid droplets by mediating phosphorylation of isoform 1 of CHKA (CHKalpha2). Regulates insulin-signaling and glycolysis by phosphorylating IRS1, PFKFB2 and PFKFB3. Involved in insulin receptor/INSR internalization. AMPK stimulates glucose uptake in muscle by increasing the translocation of the glucose transporter SLC2A4/GLUT4 to the plasma membrane, possibly by mediating phosphorylation of TBC1D4/AS160. Regulates transcription and chromatin structure by phosphorylating transcription regulators involved in energy metabolism such as CRTC2/TORC2, FOXO3, histone H2B, HDAC5, MEF2C, MLXIPL/ChREBP, EP300, HNF4A, p53/TP53, SREBF1, SREBF2 and PPARGC1A. Acts as a key regulator of glucose homeostasis in liver by phosphorylating CRTC2/TORC2, leading to CRTC2/TORC2 sequestration in the cytoplasm. In response to stress, phosphorylates 'Ser-36' of histone H2B (H2BS36ph), leading to promote transcription. Acts as a key regulator of cell growth and proliferation by phosphorylating FNIP1, TSC2, RPTOR, WDR24 and ATG1/ULK1: in response to nutrient limitation, negatively regulates the mTORC1 complex by phosphorylating RPTOR component of the mTORC1 complex and by phosphorylating and activating TSC2. Also phosphorylates and inhibits GATOR2 subunit WDR24 in response to nutrient limitation, leading to suppress glucose-mediated mTORC1 activation. In response to energetic stress, phosphorylates FNIP1, inactivating the non-canonical mTORC1 signaling, thereby promoting nuclear translocation of TFEB and TFE3, and inducing transcription of lysosomal or autophagy genes. In response to nutrient limitation, promotes autophagy by phosphorylating and activating ATG1/ULK1. In that process, it also activates WDR45/WIPI4. Phosphorylates CASP6, thereby preventing its autoprocessing and subsequent activation. AMPK also acts as a regulator of circadian rhythm by mediating phosphorylation of CRY1, leading to destabilize it. May regulate the Wnt signaling pathway by phosphorylating CTNNB1, leading to stabilize it. Also acts as a regulator of cellular polarity by remodeling the actin cytoskeleton; probably by indirectly activating myosin. Also phosphorylates CFTR, EEF2K, KLC1, NOS3 and SLC12A1. Plays an important role in the differential regulation of pro-autophagy (composed of PIK3C3, BECN1, PIK3R4 and UVRAG or ATG14) and non-autophagy (composed of PIK3C3, BECN1 and PIK3R4) complexes, in response to glucose starvation. Can inhibit the non-autophagy complex by phosphorylating PIK3C3 and can activate the pro-autophagy complex by phosphorylating BECN1. Upon glucose starvation, promotes ARF6 activation in a kinase-independent manner leading to cell migration. Upon glucose deprivation mediates the phosphorylation of ACSS2 at 'Ser-659', which exposes the nuclear localization signal of ACSS2, required for its interaction with KPNA1 and nuclear translocation. Upon stress, regulates mitochondrial fragmentation through phosphorylation of MTFR1L. The chain is 5'-AMP-activated protein kinase catalytic subunit alpha-2 (Prkaa2) from Rattus norvegicus (Rat).